We begin with the raw amino-acid sequence, 306 residues long: Beta-lactamase 1 (306 aa).

Residues 1 to 27 (MILKNKRMLKIGICVGILGLSITSLEA) form the signal peptide. Ser-91 (acyl-ester intermediate) is an active-site residue. Glu-187 acts as the Proton acceptor in catalysis. 253-255 (KSG) is a binding site for substrate.

This sequence belongs to the class-A beta-lactamase family.

The catalysed reaction is a beta-lactam + H2O = a substituted beta-amino acid. In terms of biological role, this protein is a beta-lactamase with a substrate specificity for penicillins. The protein is Beta-lactamase 1 (blaY) of Bacillus cereus.